A 425-amino-acid chain; its full sequence is Inhibin beta A chain (425 aa).

Positions 1–20 are cleaved as a signal peptide; the sequence is MPLLWLRGFLLASCWIIVRS. Residues 21-309 constitute a propeptide that is removed on maturation; the sequence is SPTPGSEGHS…EDHPHRRRRR (289 aa). Residue Asn-165 is glycosylated (N-linked (GlcNAc...) asparagine). The tract at residues 260 to 289 is disordered; the sequence is KKRKEEEGEGKKRDGEGGAGGDEEKEQSHR. A compositionally biased stretch (basic and acidic residues) spans 263–275; sequence KEEEGEGKKRDGE. Cystine bridges form between Cys-313/Cys-321, Cys-320/Cys-390, Cys-349/Cys-422, and Cys-353/Cys-424.

The protein belongs to the TGF-beta family. As to quaternary structure, dimeric, linked by one or more disulfide bonds. Inhibin A is a dimer of alpha/INHA and beta-A/INHBA. Activin A is a homodimer of beta-A/INHBA. Activin AB is a dimer of beta-A/INHBA and beta-B/INHBB. Interacts with FST and FSTL3; these interactions prevent activin A interaction to its type II receptor. Activin A interacts with ACVR2A. Activin A interacts with BMPR2. Inhibin A interacts with ACVR1; this interaction creates a non-signaling complex (NSC) that inhibits ACVR1-mediated BMP signaling. Inhibin A interacts with ACVR2A.

The protein localises to the secreted. Functionally, inhibins/activins are involved in regulating a number of diverse functions such as hypothalamic and pituitary hormone secretion, gonadal hormone secretion, germ cell development and maturation, erythroid differentiation, insulin secretion, nerve cell survival, embryonic axial development or bone growth, depending on their subunit composition. In terms of biological role, activin A is a homodimer of INHBA that plays a role in several essential biological processes including embryonic development, stem cell maintenance and differentiation, haematopoiesis, cell proliferation and tissue fibrosis. Signals through type I (such as ACVR1B or ACVR1C) and type II receptors (such as ACVR2A, ACVR2B or BMPR2) which, upon ligand binding, phosphorylate SMAD2 and SMAD3 intracellular signaling mediators that form a complex with SMAD4, translocate to the nucleus and modulate gene expression. Can also activate alternative non-canonical intracellular signaling pathways including the p38 MAPK, extracellular signal-regulated kinases 1/2 (ERK1/2) and c-Jun N-terminal kinases (JNKs) to modulate cell migration and differentiation. Alternatively, promotes osteoblastic differentiation via ACVRL1-SMAD1/5/9 pathway. In addition, can engage the type I receptor ACVR1 to form an ACVR1-activin A-type II receptor non-signaling complex (NSC) that renders receptors unavailable for engagement with BMPs, hence resulting in an apparent inhibition of ACVR1-mediated BMP signaling. Its function is as follows. Inhibin A is a dimer of alpha/INHA and beta-A/INHBA that functions as a feedback regulator in the hypothalamic-pituitary-gonadal (HPG) axis. Inhibits the secretion of FSH from the anterior pituitary gland by acting on pituitary gonadotrope cells. Antagonizes activin A by binding to the proteoglycan, betaglycan, and forming a stable complex with and, thereby, sequestering type II activin receptors while excluding type I receptor. The sequence is that of Inhibin beta A chain (INHBA) from Ovis aries (Sheep).